The chain runs to 225 residues: Ribosome maturation factor RimM (225 aa).

The PRC barrel domain maps to 144 to 225 (ADEFYWVDLI…RIVVDWEADY (82 aa)).

This sequence belongs to the RimM family. Binds ribosomal protein uS19.

The protein localises to the cytoplasm. An accessory protein needed during the final step in the assembly of 30S ribosomal subunit, possibly for assembly of the head region. Essential for efficient processing of 16S rRNA. May be needed both before and after RbfA during the maturation of 16S rRNA. It has affinity for free ribosomal 30S subunits but not for 70S ribosomes. The chain is Ribosome maturation factor RimM from Burkholderia vietnamiensis (strain G4 / LMG 22486) (Burkholderia cepacia (strain R1808)).